Here is a 103-residue protein sequence, read N- to C-terminus: Large ribosomal subunit protein uL24 (103 aa).

Belongs to the universal ribosomal protein uL24 family. Part of the 50S ribosomal subunit.

One of two assembly initiator proteins, it binds directly to the 5'-end of the 23S rRNA, where it nucleates assembly of the 50S subunit. Functionally, one of the proteins that surrounds the polypeptide exit tunnel on the outside of the subunit. This is Large ribosomal subunit protein uL24 from Dehalococcoides mccartyi (strain ATCC BAA-2266 / KCTC 15142 / 195) (Dehalococcoides ethenogenes (strain 195)).